The sequence spans 134 residues: C-C motif chemokine 21 (134 aa).

Residues 1–23 (MAQSLALSLLILVLAFGIPRTQG) form the signal peptide. Cystine bridges form between cysteine 31-cysteine 57, cysteine 32-cysteine 75, and cysteine 103-cysteine 122. Positions 88–134 (QHLDKTPSPQKPAQGCRKDRGASKTGKKGKGSKGCKRTERSQTPKGP) are disordered. Positions 98–134 (KPAQGCRKDRGASKTGKKGKGSKGCKRTERSQTPKGP) are C-terminal basic extension. A compositionally biased stretch (basic residues) spans 112–122 (TGKKGKGSKGC). The span at 123–134 (KRTERSQTPKGP) shows a compositional bias: basic and acidic residues.

It belongs to the intercrine beta (chemokine CC) family. Monomer. Binds to CCR7. Interacts with PDPN; relocalizes PDPN to the basolateral membrane. Interacts with TNFAIP6 (via Link domain). Interacts with GPR174. As to expression, highly expressed in high endothelial venules of lymph nodes, spleen and appendix. Intermediate levels found in small intestine, thyroid gland and trachea. Low level expression in thymus, bone marrow, liver, and pancreas. Also found in tonsil, fetal heart and fetal spleen.

It is found in the secreted. Its function is as follows. Inhibits hemopoiesis and stimulates chemotaxis. Chemotactic in vitro for thymocytes and activated T-cells, but not for B-cells, macrophages, or neutrophils. Shows preferential activity towards naive T-cells. May play a role in mediating homing of lymphocytes to secondary lymphoid organs. Binds to atypical chemokine receptor ACKR4 and mediates the recruitment of beta-arrestin (ARRB1/2) to ACKR4. The protein is C-C motif chemokine 21 (CCL21) of Homo sapiens (Human).